A 262-amino-acid chain; its full sequence is 3-methyl-2-oxobutanoate hydroxymethyltransferase (262 aa).

Residues aspartate 42 and aspartate 81 each coordinate Mg(2+). Residues 42-43 (DS), aspartate 81, and lysine 110 contribute to the 3-methyl-2-oxobutanoate site. Position 112 (glutamate 112) interacts with Mg(2+). The Proton acceptor role is filled by glutamate 180.

The protein belongs to the PanB family. Homodecamer; pentamer of dimers. Mg(2+) serves as cofactor.

Its subcellular location is the cytoplasm. The catalysed reaction is 3-methyl-2-oxobutanoate + (6R)-5,10-methylene-5,6,7,8-tetrahydrofolate + H2O = 2-dehydropantoate + (6S)-5,6,7,8-tetrahydrofolate. Its pathway is cofactor biosynthesis; (R)-pantothenate biosynthesis; (R)-pantoate from 3-methyl-2-oxobutanoate: step 1/2. Catalyzes the reversible reaction in which hydroxymethyl group from 5,10-methylenetetrahydrofolate is transferred onto alpha-ketoisovalerate to form ketopantoate. This chain is 3-methyl-2-oxobutanoate hydroxymethyltransferase, found in Legionella pneumophila (strain Corby).